The sequence spans 158 residues: MTDSKTEAAFKPVELYTDGACSGNPGPGGWAFVLRCPRTLKEIQRSGGQPHTTNNQMELMAVIRGLEALKEPCAVDLYSDSKYVGQGMSSWMAGWKSRGWKRKDGSKLVPVKNVELWQELDQQMQAHRVTYHHVKGHAGHTENELCDKLAVAAYQQYL.

The region spanning 9-155 is the RNase H type-1 domain; it reads AFKPVELYTD…CDKLAVAAYQ (147 aa). Mg(2+) is bound by residues Asp18, Glu58, Asp80, and Asp147.

The protein belongs to the RNase H family. As to quaternary structure, monomer. Mg(2+) is required as a cofactor.

It localises to the cytoplasm. It catalyses the reaction Endonucleolytic cleavage to 5'-phosphomonoester.. Endonuclease that specifically degrades the RNA of RNA-DNA hybrids. The chain is Ribonuclease H from Rhodopirellula baltica (strain DSM 10527 / NCIMB 13988 / SH1).